The following is a 92-amino-acid chain: Defensin-like protein 226 (92 aa).

A signal peptide spans 1–27; sequence MKCGVLFMISCLLITFLVLSHVREVES. Disulfide bonds link Cys-33/Cys-92, Cys-43/Cys-71, Cys-51/Cys-86, and Cys-69/Cys-88.

Belongs to the DEFL family.

It is found in the secreted. This is Defensin-like protein 226 (SCRL2) from Arabidopsis thaliana (Mouse-ear cress).